A 478-amino-acid chain; its full sequence is Proline--tRNA ligase (478 aa).

It belongs to the class-II aminoacyl-tRNA synthetase family. ProS type 3 subfamily. Homodimer.

The protein resides in the cytoplasm. It catalyses the reaction tRNA(Pro) + L-proline + ATP = L-prolyl-tRNA(Pro) + AMP + diphosphate. In terms of biological role, catalyzes the attachment of proline to tRNA(Pro) in a two-step reaction: proline is first activated by ATP to form Pro-AMP and then transferred to the acceptor end of tRNA(Pro). The chain is Proline--tRNA ligase from Clostridium botulinum (strain Langeland / NCTC 10281 / Type F).